The primary structure comprises 97 residues: Cytochrome c2 iso-2 (97 aa).

Heme c-binding residues include Cys10, Cys13, His14, and Met75.

This sequence belongs to the cytochrome c family. Post-translationally, binds 1 heme c group covalently per subunit.

Cytochrome c2 is found mainly in purple, non-sulfur, photosynthetic bacteria where it functions as the electron donor to the oxidized bacteriochlorophyll in the photophosphorylation pathway. However, it may also have a role in the respiratory chain and is found in some non-photosynthetic bacteria. This is Cytochrome c2 iso-2 from Magnetospirillum molischianum (Rhodospirillum molischianum).